The following is a 203-amino-acid chain: MVSIRPCQIGDLMSMQNANLTCLPENYQMKYYLYHFLTWPQTSFVAEDDKGNVVGYVLAKIDENEPKRGHITSLAVLRSQRKLGIATKLMKQAEVALLEVYDADCVSLHVRKSNRAAFSLYHEVLKFKIDEIEKEYYGDKEDAYSMVLYLKPEVEEEKEREKQLEKINKAAKESIEAAKRANEEPKPVSNVIHGKKKNVKKIE.

The 150-residue stretch at 2–151 folds into the N-acetyltransferase domain; sequence VSIRPCQIGD…DAYSMVLYLK (150 aa). The span at 177–186 shows a compositional bias: basic and acidic residues; the sequence is AAKRANEEPK. Residues 177-203 form a disordered region; sequence AAKRANEEPKPVSNVIHGKKKNVKKIE. Residues 193-203 show a composition bias toward basic residues; it reads HGKKKNVKKIE.

The protein belongs to the acetyltransferase family. ARD1 subfamily.

Seems to be involved in N-acetylation. The chain is N-terminal acetyltransferase complex ARD1 subunit homolog (natA) from Dictyostelium discoideum (Social amoeba).